Reading from the N-terminus, the 359-residue chain is Halocin-H4 (359 aa).

An N-terminal signal peptide occupies residues 1–46 (MSKDRDGRRTSRRGTLKKIGGFSLGALSFGAVGRTQAATGSSVTTA). 2 disordered regions span residues 40–59 (GSSV…DPKS) and 340–359 (IPDR…SRKQ).

Its subcellular location is the secreted. In terms of biological role, has antibacterial activity against other haloarchaeons. Interacts with the membrane of the target cells where it causes permeability changes that result in an ionic imbalance leading to cell lysis and death. The sequence is that of Halocin-H4 (halH4) from Haloferax mediterranei (strain ATCC 33500 / DSM 1411 / JCM 8866 / NBRC 14739 / NCIMB 2177 / R-4) (Halobacterium mediterranei).